A 397-amino-acid chain; its full sequence is Ribosomal RNA large subunit methyltransferase I (397 aa).

Residues 2-82 enclose the PUA domain; sequence TTSIYLVKGR…EVINVDFFVK (81 aa).

The protein belongs to the methyltransferase superfamily. RlmI family.

It is found in the cytoplasm. It carries out the reaction cytidine(1962) in 23S rRNA + S-adenosyl-L-methionine = 5-methylcytidine(1962) in 23S rRNA + S-adenosyl-L-homocysteine + H(+). Functionally, specifically methylates the cytosine at position 1962 (m5C1962) of 23S rRNA. The sequence is that of Ribosomal RNA large subunit methyltransferase I from Photobacterium profundum (strain SS9).